A 143-amino-acid polypeptide reads, in one-letter code: Nucleoside diphosphate kinase (143 aa).

Positions 11, 59, 87, 93, 104, and 114 each coordinate ATP. His117 (pros-phosphohistidine intermediate) is an active-site residue.

It belongs to the NDK family. In terms of assembly, homotetramer. Requires Mg(2+) as cofactor.

It localises to the cytoplasm. The enzyme catalyses a 2'-deoxyribonucleoside 5'-diphosphate + ATP = a 2'-deoxyribonucleoside 5'-triphosphate + ADP. It carries out the reaction a ribonucleoside 5'-diphosphate + ATP = a ribonucleoside 5'-triphosphate + ADP. Functionally, major role in the synthesis of nucleoside triphosphates other than ATP. The ATP gamma phosphate is transferred to the NDP beta phosphate via a ping-pong mechanism, using a phosphorylated active-site intermediate. This Shewanella frigidimarina (strain NCIMB 400) protein is Nucleoside diphosphate kinase.